The chain runs to 400 residues: uncharacterized protein (400 aa).

The N-terminal stretch at 1-31 is a signal peptide; sequence MENPIKPVATRSIGIAVVLLVVGIVIGFAVG.

This sequence belongs to the bacterial solute-binding protein 1 family. WtpA subfamily.

This is an uncharacterized protein from Thermoplasma acidophilum (strain ATCC 25905 / DSM 1728 / JCM 9062 / NBRC 15155 / AMRC-C165).